Reading from the N-terminus, the 446-residue chain is MSNRKYFGTDGIRGKVGESPITPDFVLKLGWAAGKVLARHGSRKIIIGKDTRISGYMLESALEAGLAAAGLSALFTGPMPTPAVAYLTRTFRAEAGIVISASHNPFYDNGIKFFSIDGTKLPDDVEEAIEAEMEKPLTCVESAELGKANRIVDAAGRYIEFCKGTFPSELSLNELKIVVDCANGATYHIAPSVLRELGATVITIGCEPDGMNINEECGATDVRLLQERVLAEGAHVGLAFDGDGDRLMMVDHLGNKVDGDQILYIIAREGLRQGQLKGGAVGTLMSNMGLQLALKDLGIPFVRAKVGDRYVLEAMQEKGWRIGAENSGHVILLDKTTTGDGIVAGLQVLTAMVRNHMSLHDLCSGMKLLPQILVNVRFSGEHNPLKSDEVEEVTRQVEKELGGRGRVLLRKSGTEPLIRVMVEGDAEESLIAEMANRIADAVKAAG.

The Phosphoserine intermediate role is filled by Ser102. Mg(2+) is bound by residues Ser102, Asp241, Asp243, and Asp245. Residue Ser102 is modified to Phosphoserine.

The protein belongs to the phosphohexose mutase family. It depends on Mg(2+) as a cofactor. In terms of processing, activated by phosphorylation.

It catalyses the reaction alpha-D-glucosamine 1-phosphate = D-glucosamine 6-phosphate. Catalyzes the conversion of glucosamine-6-phosphate to glucosamine-1-phosphate. This chain is Phosphoglucosamine mutase, found in Yersinia pseudotuberculosis serotype O:1b (strain IP 31758).